The chain runs to 339 residues: Quinolinate synthase (339 aa).

Residues His-63 and Ser-81 each contribute to the iminosuccinate site. Cys-126 is a binding site for [4Fe-4S] cluster. Residues 152–154 (YVN) and Ser-169 each bind iminosuccinate. Cys-211 provides a ligand contact to [4Fe-4S] cluster. Iminosuccinate is bound by residues 237–239 (HPE) and Thr-254. Position 297 (Cys-297) interacts with [4Fe-4S] cluster.

This sequence belongs to the quinolinate synthase family. Type 2 subfamily. The cofactor is [4Fe-4S] cluster.

It is found in the cytoplasm. The catalysed reaction is iminosuccinate + dihydroxyacetone phosphate = quinolinate + phosphate + 2 H2O + H(+). It functions in the pathway cofactor biosynthesis; NAD(+) biosynthesis; quinolinate from iminoaspartate: step 1/1. Functionally, catalyzes the condensation of iminoaspartate with dihydroxyacetone phosphate to form quinolinate. This Xylella fastidiosa (strain 9a5c) protein is Quinolinate synthase.